The chain runs to 232 residues: Large ribosomal subunit protein uL1 (232 aa).

Belongs to the universal ribosomal protein uL1 family. As to quaternary structure, part of the 50S ribosomal subunit.

Its function is as follows. Binds directly to 23S rRNA. The L1 stalk is quite mobile in the ribosome, and is involved in E site tRNA release. Protein L1 is also a translational repressor protein, it controls the translation of the L11 operon by binding to its mRNA. The sequence is that of Large ribosomal subunit protein uL1 from Alkaliphilus metalliredigens (strain QYMF).